A 168-amino-acid polypeptide reads, in one-letter code: Peptidoglycan-associated lipoprotein (168 aa).

The first 24 residues, 1 to 24 (MGRIAALTRNPVMIALVAMLAIAG), serve as a signal peptide directing secretion. The N-palmitoyl cysteine moiety is linked to residue C25. C25 is lipidated: S-diacylglycerol cysteine. An OmpA-like domain is found at 50–167 (AQDFTVNIGD…RAVTTLSGAG (118 aa)).

It belongs to the Pal lipoprotein family. The Tol-Pal system is composed of five core proteins: the inner membrane proteins TolA, TolQ and TolR, the periplasmic protein TolB and the outer membrane protein Pal. They form a network linking the inner and outer membranes and the peptidoglycan layer.

The protein resides in the cell outer membrane. Part of the Tol-Pal system, which plays a role in outer membrane invagination during cell division and is important for maintaining outer membrane integrity. This is Peptidoglycan-associated lipoprotein from Mesorhizobium japonicum (strain LMG 29417 / CECT 9101 / MAFF 303099) (Mesorhizobium loti (strain MAFF 303099)).